A 458-amino-acid polypeptide reads, in one-letter code: uncharacterized protein (458 aa).

The region spanning 8-66 is the TRAM domain; it reads PVEKNEFIDVVFEDLTHDGAGVAKVKGYPIFVKNGLPGEEAQIKIIKVKKNFAFGRLMK. Positions 79, 85, 88, and 166 each coordinate [4Fe-4S] cluster. Q290, Y319, E340, and D388 together coordinate S-adenosyl-L-methionine. C415 functions as the Nucleophile in the catalytic mechanism.

This sequence belongs to the class I-like SAM-binding methyltransferase superfamily. RNA M5U methyltransferase family.

This is an uncharacterized protein from Bacillus cereus (strain ATCC 14579 / DSM 31 / CCUG 7414 / JCM 2152 / NBRC 15305 / NCIMB 9373 / NCTC 2599 / NRRL B-3711).